The following is a 161-amino-acid chain: Nucleotide-binding protein H16_A3060 (161 aa).

This sequence belongs to the YajQ family.

Nucleotide-binding protein. The sequence is that of Nucleotide-binding protein H16_A3060 from Cupriavidus necator (strain ATCC 17699 / DSM 428 / KCTC 22496 / NCIMB 10442 / H16 / Stanier 337) (Ralstonia eutropha).